Consider the following 318-residue polypeptide: uncharacterized protein (318 aa).

Residues 67–157 (LAFDELEKEK…SLKAIQTSQE (91 aa)) adopt a coiled-coil conformation. The interval 172-318 (ESTNKVEKNA…KGFFARLFNL (147 aa)) is disordered. Composition is skewed to basic and acidic residues over residues 175–193 (NKVE…KDSK) and 219–236 (KVDK…EKAS). Positions 237–248 (VEQSKNGNAAET) are enriched in polar residues. Composition is skewed to basic and acidic residues over residues 249 to 274 (SNKE…HAEA) and 300 to 310 (SEPKPQEEKKG).

This is an uncharacterized protein from Staphylococcus aureus (strain MW2).